The primary structure comprises 560 residues: Putative transport protein VS_1837 (560 aa).

A run of 5 helical transmembrane segments spans residues 5 to 25, 37 to 57, 66 to 86, 91 to 111, and 155 to 175; these read VVLLLKQNPILLIFVVLSIGL, LGNSIGVLITSLIMGHLGFSF, FMLFIYCVGIEAGPNFFGIFF, HYLILSLVVLSTAIALTYFCS, and LGLVIENLSVGYAMAYLVGLI. RCK C-terminal domains are found at residues 203–292 and 293–376; these read RGLG…FRNG and KEVF…KIGF. Helical transmembrane passes span 386 to 406, 409 to 429, 450 to 470, 478 to 498, 506 to 526, and 539 to 559; these read LTAFCSFFILGILFGLITMTF, VSFGLGNAVGLLLSGIMLGFL, LGLMFFMVGIGLSAGGKIFEH, VIGIALIVSVLPVFFAYLVGA, ALLFGAIIGARTCAPAMDIVN, and AGTYAIANILMTLAGTFIIII.

This sequence belongs to the AAE transporter (TC 2.A.81) family. YbjL subfamily.

The protein localises to the cell membrane. The protein is Putative transport protein VS_1837 of Vibrio atlanticus (strain LGP32) (Vibrio splendidus (strain Mel32)).